A 540-amino-acid polypeptide reads, in one-letter code: Growth factor receptor-bound protein 14 (540 aa).

Residues 1–23 are disordered; the sequence is MTTSLQDGQSAAGRAAARDSPLA. T2 is modified (N-acetylthreonine). Residues 106–192 enclose the Ras-associating domain; the sequence is KKQVIKVYSE…NKLYFRKNYA (87 aa). Residues 234–342 form the PH domain; sequence YPEIHGFLHA…WVTAIRLLKY (109 aa). Residues S372 and S375 each carry the phosphoserine modification. Residues 439 to 535 enclose the SH2 domain; the sequence is WFHHKMSREE…VLPCKLKHYC (97 aa).

Belongs to the GRB7/10/14 family. Interacts with the cytoplasmic domain of the autophosphorylated insulin receptor, through the SH2 domain. Interacts with GRB14 (via BPS domain); this interaction protects the tyrosines in the activation loop on INSR from dephosphorylation. Binds to the ankyrin repeat region of TNKS2 via its N-terminus. Interacts with activated NRAS. Interacts (via SH2 domain) with TEK/TIE2 (tyrosine phosphorylated). Phosphorylated on serine residues. Phosphorylated on tyrosine residues by TEK/TIE2.

It localises to the cytoplasm. The protein localises to the endosome membrane. Adapter protein which modulates coupling of cell surface receptor kinases with specific signaling pathways. Binds to, and suppresses signals from, the activated insulin receptor (INSR). Potent inhibitor of insulin-stimulated MAPK3 phosphorylation. Plays a critical role regulating PDPK1 membrane translocation in response to insulin stimulation and serves as an adapter protein to recruit PDPK1 to activated insulin receptor, thus promoting PKB/AKT1 phosphorylation and transduction of the insulin signal. In Bos taurus (Bovine), this protein is Growth factor receptor-bound protein 14 (GRB14).